A 274-amino-acid polypeptide reads, in one-letter code: Urease accessory protein UreD (274 aa).

It belongs to the UreD family. In terms of assembly, ureD, UreF and UreG form a complex that acts as a GTP-hydrolysis-dependent molecular chaperone, activating the urease apoprotein by helping to assemble the nickel containing metallocenter of UreC. The UreE protein probably delivers the nickel.

The protein resides in the cytoplasm. Required for maturation of urease via the functional incorporation of the urease nickel metallocenter. The chain is Urease accessory protein UreD from Enterobacter sp. (strain 638).